The following is a 506-amino-acid chain: Bifunctional purine biosynthesis protein PurH (506 aa).

The 146-residue stretch at 1-146 folds into the MGS-like domain; the sequence is MARLALLSVS…KNFAHLTVLC (146 aa).

It belongs to the PurH family.

The catalysed reaction is (6R)-10-formyltetrahydrofolate + 5-amino-1-(5-phospho-beta-D-ribosyl)imidazole-4-carboxamide = 5-formamido-1-(5-phospho-D-ribosyl)imidazole-4-carboxamide + (6S)-5,6,7,8-tetrahydrofolate. The enzyme catalyses IMP + H2O = 5-formamido-1-(5-phospho-D-ribosyl)imidazole-4-carboxamide. It participates in purine metabolism; IMP biosynthesis via de novo pathway; 5-formamido-1-(5-phospho-D-ribosyl)imidazole-4-carboxamide from 5-amino-1-(5-phospho-D-ribosyl)imidazole-4-carboxamide (10-formyl THF route): step 1/1. Its pathway is purine metabolism; IMP biosynthesis via de novo pathway; IMP from 5-formamido-1-(5-phospho-D-ribosyl)imidazole-4-carboxamide: step 1/1. In Nostoc sp. (strain PCC 7120 / SAG 25.82 / UTEX 2576), this protein is Bifunctional purine biosynthesis protein PurH.